The primary structure comprises 233 residues: Guanylate kinase (233 aa).

In terms of domain architecture, Guanylate kinase-like spans 3 to 184 (GTIFIISAPS…AVEQLRAIVL (182 aa)). Position 10-17 (10-17 (APSGSGKS)) interacts with ATP.

This sequence belongs to the guanylate kinase family.

Its subcellular location is the cytoplasm. The enzyme catalyses GMP + ATP = GDP + ADP. In terms of biological role, essential for recycling GMP and indirectly, cGMP. This is Guanylate kinase from Koribacter versatilis (strain Ellin345).